We begin with the raw amino-acid sequence, 357 residues long: D-alanine--D-alanine ligase (357 aa).

The region spanning 134–339 (KQLFEHRGLP…YPDLIAKLID (206 aa)) is the ATP-grasp domain. 167-222 (NDKLTYPVFVKPANLGSSVGISKCNNEEELKSGIAEAFQFDRKLVIEQGINAREIE) contributes to the ATP binding site. Residues Asp293, Glu306, and Asn308 each coordinate Mg(2+).

It belongs to the D-alanine--D-alanine ligase family. Mg(2+) is required as a cofactor. The cofactor is Mn(2+).

The protein localises to the cytoplasm. It catalyses the reaction 2 D-alanine + ATP = D-alanyl-D-alanine + ADP + phosphate + H(+). It participates in cell wall biogenesis; peptidoglycan biosynthesis. In terms of biological role, cell wall formation. This Staphylococcus epidermidis (strain ATCC 35984 / DSM 28319 / BCRC 17069 / CCUG 31568 / BM 3577 / RP62A) protein is D-alanine--D-alanine ligase.